The sequence spans 209 residues: Bcl-2 homologous antagonist/killer (209 aa).

Residues 1-28 (MASGQGPGPPKVGCDESPSPSEQQVAQD) form a disordered region. N-acetylalanine is present on Ala2. Residues 18–27 (PSPSEQQVAQ) are compositionally biased toward polar residues. A BH3 motif is present at residues 72 to 86 (VGRQLALIGDDINRR). Positions 115 to 134 (SLFKSGISWGRVVALLGFGY) match the BH1 motif. Asp158 and His162 together coordinate Zn(2+). Positions 167–182 (RWIAQRGGWVAALNFR) match the BH2 motif. A helical membrane pass occupies residues 186-203 (ILTVMVIFGVVLLGQFVV).

It belongs to the Bcl-2 family. Homodimer. Formation of the homodimer is zinc-dependent. Forms heterodimers with BCL2 and BCL2L1 isoform Bcl-X(L). Forms heterooligomers with BAX. Interacts with BCL2A1. Interacts withRTL10/BOP. Interacts with VDAC1. Interacts with GIMAP3/IAN4 and GIMAP5/IAN5. As to quaternary structure, (Microbial infection) Interacts with gamma-herpesvirus 68 protein vBCL2. As to expression, widely expressed.

It is found in the mitochondrion outer membrane. Its function is as follows. In the presence of an appropriate stimulus, accelerates programmed cell death by binding to, and antagonizing the anti-apoptotic action of BCL2. This Mus musculus (Mouse) protein is Bcl-2 homologous antagonist/killer (Bak1).